The chain runs to 244 residues: Eukaryotic translation initiation factor 6 (244 aa).

Serine 174 and serine 175 each carry phosphoserine; by CK1.

Belongs to the eIF-6 family. As to quaternary structure, monomer. Associates with the 60S ribosomal subunit. Post-translationally, phosphorylation at Ser-174 and Ser-175 promotes nuclear export.

The protein resides in the cytoplasm. Its subcellular location is the nucleus. The protein localises to the nucleolus. Functionally, binds to the 60S ribosomal subunit and prevents its association with the 40S ribosomal subunit to form the 80S initiation complex in the cytoplasm. Is also involved in ribosome biogenesis. Associates with pre-60S subunits in the nucleus and is involved in its nuclear export. The polypeptide is Eukaryotic translation initiation factor 6 (tif6) (Schizosaccharomyces pombe (strain 972 / ATCC 24843) (Fission yeast)).